The primary structure comprises 600 residues: Dihydroxy-acid dehydratase (600 aa).

Residue D82 coordinates Mg(2+). C123 serves as a coordination point for [2Fe-2S] cluster. Mg(2+) contacts are provided by D124 and K125. The residue at position 125 (K125) is an N6-carboxylysine. [2Fe-2S] cluster is bound at residue C192. Position 489 (E489) interacts with Mg(2+). S515 serves as the catalytic Proton acceptor.

Belongs to the IlvD/Edd family. As to quaternary structure, homodimer. [2Fe-2S] cluster is required as a cofactor. Requires Mg(2+) as cofactor.

It carries out the reaction (2R)-2,3-dihydroxy-3-methylbutanoate = 3-methyl-2-oxobutanoate + H2O. The catalysed reaction is (2R,3R)-2,3-dihydroxy-3-methylpentanoate = (S)-3-methyl-2-oxopentanoate + H2O. It functions in the pathway amino-acid biosynthesis; L-isoleucine biosynthesis; L-isoleucine from 2-oxobutanoate: step 3/4. The protein operates within amino-acid biosynthesis; L-valine biosynthesis; L-valine from pyruvate: step 3/4. In terms of biological role, functions in the biosynthesis of branched-chain amino acids. Catalyzes the dehydration of (2R,3R)-2,3-dihydroxy-3-methylpentanoate (2,3-dihydroxy-3-methylvalerate) into 2-oxo-3-methylpentanoate (2-oxo-3-methylvalerate) and of (2R)-2,3-dihydroxy-3-methylbutanoate (2,3-dihydroxyisovalerate) into 2-oxo-3-methylbutanoate (2-oxoisovalerate), the penultimate precursor to L-isoleucine and L-valine, respectively. The protein is Dihydroxy-acid dehydratase of Phocaeicola vulgatus (strain ATCC 8482 / DSM 1447 / JCM 5826 / CCUG 4940 / NBRC 14291 / NCTC 11154) (Bacteroides vulgatus).